A 639-amino-acid polypeptide reads, in one-letter code: Sodium-dependent phosphate transport protein 2A (639 aa).

Over 1-103 the chain is Cytoplasmic; sequence MISYGENLGG…LRRAGVTLLK (103 aa). Serine 14 and serine 34 each carry phosphoserine. A helical transmembrane segment spans residues 104–125; the sequence is VPLMLSFLYLFVCSLDVLSSAF. The Extracellular segment spans residues 126–145; that stretch reads QLAGGKVAGDIFKDNAILSN. A helical membrane pass occupies residues 146-163; it reads PVAGLVVGILVTVLVQSS. Topologically, residues 164–165 are cytoplasmic; that stretch reads ST. A helical transmembrane segment spans residues 166–185; the sequence is STSIVVSMVSSGLLEVSSAI. Topologically, residues 186 to 347 are extracellular; the sequence is PIIMGSNIGT…HIFVDTGLPD (162 aa). 2 disulfides stabilise this stretch: cysteine 225/cysteine 522 and cysteine 306/cysteine 336. Asparagine 298, asparagine 323, and asparagine 330 each carry an N-linked (GlcNAc...) asparagine glycan. The chain crosses the membrane as a helical span at residues 348 to 370; that stretch reads LAVGLILLAGSLALLCTCLILLV. Residues 371–412 are Cytoplasmic-facing; it reads KMLNSLLKGQVAKVIQKVINTDFPTPFTWATGYFAMVVGASM. The helical transmembrane segment at 413–436 threads the bilayer; sequence TFVVQSSSVFTSAITPLIGLGVIS. At 437–466 the chain is on the extracellular side; that stretch reads IERAYPLTLGSNIGTTTTAILAALASPREK. The chain crosses the membrane as a helical span at residues 467–487; that stretch reads LSSAFQIALCHFFFNISGILL. At 488-513 the chain is on the cytoplasmic side; it reads WYPVPCTRLPIRMAKALGKRTAKYRW. A Phosphothreonine; by PKC modification is found at threonine 508. The helical transmembrane segment at 514–534 threads the bilayer; the sequence is FAVLYLLLCFLLLPSMVFGLS. Topologically, residues 535–539 are extracellular; sequence MAGWR. A helical membrane pass occupies residues 540–561; it reads AMVGVGAPFGALLAFVVLVSAL. Residues 562–639 are Cytoplasmic-facing; sequence QHRSPGCLPK…MPHHHDATRL (78 aa). Serine 607 carries the post-translational modification Phosphoserine. Threonine 623 carries the post-translational modification Phosphothreonine. Serine 625 is modified (phosphoserine).

Belongs to the SLC34A transporter family. In terms of assembly, interacts via its C-terminal region with NHERF4. Interacts with NHERF1. Interacts with TMEM174; regulates SLC34A1 internalization by PTH and FGF23.

It is found in the apical cell membrane. The protein localises to the cell membrane. The catalysed reaction is 3 Na(+)(out) + phosphate(out) = 3 Na(+)(in) + phosphate(in). In terms of biological role, involved in actively transporting phosphate into cells via Na(+) cotransport in the renal brush border membrane. The cotransport has a Na(+):Pi stoichiometry of 3:1 and is electrogenic. This chain is Sodium-dependent phosphate transport protein 2A, found in Ovis aries (Sheep).